Here is a 589-residue protein sequence, read N- to C-terminus: ATP-dependent lipid A-core flippase (589 aa).

5 helical membrane-spanning segments follow: residues 29–49 (LLLV…TGFL), 70–90 (WLPV…YITD), 157–177 (VIGA…TILV), 261–281 (MIGA…ALAG), and 283–303 (LTAG…PGLK). One can recognise an ABC transmembrane type-1 domain in the interval 32–314 (VAALIAALIE…LTNVQNMVQR (283 aa)). The ABC transporter domain maps to 346-582 (IEFRDVTARY…GGLYSHLHGM (237 aa)). ATP is bound at residue 380–387 (GRSGSGKS).

The protein belongs to the ABC transporter superfamily. Lipid exporter (TC 3.A.1.106) family. In terms of assembly, homodimer.

The protein localises to the cell inner membrane. The catalysed reaction is ATP + H2O + lipid A-core oligosaccharideSide 1 = ADP + phosphate + lipid A-core oligosaccharideSide 2.. Involved in lipopolysaccharide (LPS) biosynthesis. Translocates lipid A-core from the inner to the outer leaflet of the inner membrane. Transmembrane domains (TMD) form a pore in the inner membrane and the ATP-binding domain (NBD) is responsible for energy generation. The sequence is that of ATP-dependent lipid A-core flippase from Xanthomonas euvesicatoria pv. vesicatoria (strain 85-10) (Xanthomonas campestris pv. vesicatoria).